The primary structure comprises 49 residues: Large ribosomal subunit protein bL33B (49 aa).

This sequence belongs to the bacterial ribosomal protein bL33 family.

The chain is Large ribosomal subunit protein bL33B from Lactobacillus delbrueckii subsp. bulgaricus (strain ATCC BAA-365 / Lb-18).